Here is a 434-residue protein sequence, read N- to C-terminus: UPF0597 protein CLK_1462 (434 aa).

The protein belongs to the UPF0597 family.

This Clostridium botulinum (strain Loch Maree / Type A3) protein is UPF0597 protein CLK_1462.